Consider the following 83-residue polypeptide: Small ribosomal subunit protein uS17 (83 aa).

It belongs to the universal ribosomal protein uS17 family. As to quaternary structure, part of the 30S ribosomal subunit.

Functionally, one of the primary rRNA binding proteins, it binds specifically to the 5'-end of 16S ribosomal RNA. In Magnetococcus marinus (strain ATCC BAA-1437 / JCM 17883 / MC-1), this protein is Small ribosomal subunit protein uS17.